Reading from the N-terminus, the 503-residue chain is Probable voltage-gated potassium channel subunit kvs-4 (503 aa).

The Cytoplasmic portion of the chain corresponds to 1 to 231 (MNSAIMQGAA…EPASSGKAQA (231 aa)). The Required for dendritic localization signature appears at 217-219 (WNI). Residues 232–252 (FAVCSVVFVLISISGLVLGSL) traverse the membrane as a helical segment. The Extracellular segment spans residues 253–275 (PELQVATKQRNNLTGEEFTEMEP). Residue asparagine 264 is glycosylated (N-linked (GlcNAc...) asparagine). A helical membrane pass occupies residues 276–296 (MPILGYIEYVCIVWFTMEYGL). At 297 to 313 (KMLVSAERSKTFRQLLN) the chain is on the cytoplasmic side. The chain crosses the membrane as a helical span at residues 314–334 (IIDLLAILPFIIEMLLLIFGI). Topologically, residues 335-346 (STEQLRDLKGAF) are extracellular. The chain crosses the membrane as a helical; Voltage-sensor span at residues 347–366 (LVIRILRVLRVIRVLKLGRY). Residues 367 to 383 (SSGLQMFGKTLKASFRQ) are Cytoplasmic-facing. The tract at residues 368–383 (SGLQMFGKTLKASFRQ) is S4-S5 linker. A helical transmembrane segment spans residues 384–404 (LGMMAMVVMTGVIFFSTLVYF). Topologically, residues 405–417 (LEKDEPASKFHSI) are extracellular. The segment at residues 418–429 (PAACWWCIVTMT) is an intramembrane region (helical). An intramembrane segment occupies 430–434 (TVGYG). A Selectivity filter motif is present at residues 430–435 (TVGYGD). The Extracellular portion of the chain corresponds to 435–445 (DLTPVTVPGKL). Residues 446–466 (VATGAIACGVLVLALPITIIV) traverse the membrane as a helical segment. The Cytoplasmic portion of the chain corresponds to 467-503 (DNFMKVAETERPAGGNRYRTSQYPKATKSEQMILKVT). A Required for dendritic localization motif is present at residues 496–500 (EQMIL).

This sequence belongs to the potassium channel family. B (Shab) (TC 1.A.1.2) subfamily. Kv2.2/KCNB2 sub-subfamily. In terms of assembly, homotetramer or heterotetramer. Interacts with unc-101 (via N-terminus); which targets kvs-4 to dendrites. In terms of tissue distribution, expressed in the cholinergic motor neuron DA9, mechanosensory neurons ALM and PLM, and the interneuron PVPL.

The protein resides in the cell membrane. The protein localises to the perikaryon. It localises to the cell projection. Its subcellular location is the axon. It is found in the dendrite. Functionally, voltage-gated potassium channel that mediates transmembrane potassium transport in excitable membranes. This Caenorhabditis elegans protein is Probable voltage-gated potassium channel subunit kvs-4.